The chain runs to 562 residues: Sulfite reductase [NADPH] hemoprotein beta-component (562 aa).

[4Fe-4S] cluster is bound by residues C428, C434, C473, and C477. C477 contacts siroheme.

The protein belongs to the nitrite and sulfite reductase 4Fe-4S domain family. As to quaternary structure, alpha(8)-beta(8). The alpha component is a flavoprotein, the beta component is a hemoprotein. The cofactor is siroheme. Requires [4Fe-4S] cluster as cofactor.

It catalyses the reaction hydrogen sulfide + 3 NADP(+) + 3 H2O = sulfite + 3 NADPH + 4 H(+). It participates in sulfur metabolism; hydrogen sulfide biosynthesis; hydrogen sulfide from sulfite (NADPH route): step 1/1. In terms of biological role, component of the sulfite reductase complex that catalyzes the 6-electron reduction of sulfite to sulfide. This is one of several activities required for the biosynthesis of L-cysteine from sulfate. This Myxococcus xanthus (strain DK1622) protein is Sulfite reductase [NADPH] hemoprotein beta-component.